Consider the following 493-residue polypeptide: UDP-N-acetylmuramoyl-L-alanyl-D-glutamate--2,6-diaminopimelate ligase (493 aa).

A UDP-N-acetyl-alpha-D-muramoyl-L-alanyl-D-glutamate-binding site is contributed by threonine 32. ATP is bound at residue 110–116 (GTNGKTT). Residues asparagine 151, 152–153 (TT), serine 179, and arginine 187 contribute to the UDP-N-acetyl-alpha-D-muramoyl-L-alanyl-D-glutamate site. Lysine 219 carries the post-translational modification N6-carboxylysine. Meso-2,6-diaminopimelate contacts are provided by residues arginine 386, 410–413 (DNPR), glycine 460, and glutamate 464. Residues 410-413 (DNPR) carry the Meso-diaminopimelate recognition motif motif.

This sequence belongs to the MurCDEF family. MurE subfamily. The cofactor is Mg(2+). Carboxylation is probably crucial for Mg(2+) binding and, consequently, for the gamma-phosphate positioning of ATP.

It is found in the cytoplasm. It catalyses the reaction UDP-N-acetyl-alpha-D-muramoyl-L-alanyl-D-glutamate + meso-2,6-diaminopimelate + ATP = UDP-N-acetyl-alpha-D-muramoyl-L-alanyl-gamma-D-glutamyl-meso-2,6-diaminopimelate + ADP + phosphate + H(+). It functions in the pathway cell wall biogenesis; peptidoglycan biosynthesis. Its function is as follows. Catalyzes the addition of meso-diaminopimelic acid to the nucleotide precursor UDP-N-acetylmuramoyl-L-alanyl-D-glutamate (UMAG) in the biosynthesis of bacterial cell-wall peptidoglycan. This chain is UDP-N-acetylmuramoyl-L-alanyl-D-glutamate--2,6-diaminopimelate ligase, found in Lactiplantibacillus plantarum (strain ATCC BAA-793 / NCIMB 8826 / WCFS1) (Lactobacillus plantarum).